A 100-amino-acid chain; its full sequence is Elevenin (100 aa).

A signal peptide spans 1–24 (MALSQKALLVLVLSMLLTASDSWA). Cysteines 29 and 38 form a disulfide. The propeptide occupies 44–100 (KRGGDSLSVGGSAELDDTLTDPFLKSEEPKEWRELTRLSRVLQTFLSHPTGEMEQHD).

Belongs to the elevenin family. Monomer. Expressed by the venom duct.

It is found in the secreted. Functionally, may mimic the function of prey elevenin neuropeptide. In vivo, intracranial injection in mice induces hyperactivity. This chain is Elevenin, found in Conus ammiralis (Admiral cone).